Reading from the N-terminus, the 479-residue chain is UPF0164 protein TP_0865 (479 aa).

The N-terminal stretch at 1-49 (MVRMRRRRACSSGGACGCAAVRGARSFLSVRVLGMRIGMSALCLAPLFA) is a signal peptide.

This sequence belongs to the UPF0164 family.

This Treponema pallidum (strain Nichols) protein is UPF0164 protein TP_0865.